The following is a 574-amino-acid chain: Pre-mRNA-processing protein 45 (574 aa).

Disordered regions lie at residues 1-46, 203-234, 350-406, 478-503, and 549-574; these read MAAL…WKPK, PPRFKHKKIPRGPAEPPPPVLQSPPRAATAQD, ETGI…SEMR, AGSSRNDESFGGGTEEGIKEEMSKDR, and MDAARRGGKRTAEDRDEERRKRARDE. Composition is skewed to pro residues over residues 24 to 33 and 215 to 224; these read APLPTTPGPQ and PAEPPPPVLQ. The span at 363 to 377 shows a compositional bias: acidic residues; it reads GSEEESDEEEEDEEA. Composition is skewed to basic and acidic residues over residues 378–397, 493–503, and 558–574; these read IRERNIVREEKRREREKEMR, EGIKEEMSKDR, and RTAEDRDEERRKRARDE.

This sequence belongs to the SNW family. In terms of assembly, associated with the spliceosome.

The protein resides in the nucleus. Involved in pre-mRNA splicing. The chain is Pre-mRNA-processing protein 45 (PRP45) from Cryptococcus neoformans var. neoformans serotype D (strain JEC21 / ATCC MYA-565) (Filobasidiella neoformans).